Consider the following 181-residue polypeptide: Copper-resistant cuproprotein CopI (181 aa).

The signal sequence occupies residues 1-24 (MFPRRLLPASLIVLGVLFGASAQA). The Cu(2+) site is built by His-79, Cys-163, His-168, and Met-173.

The protein belongs to the CopI family.

The protein resides in the periplasm. Involved in copper tolerance. The polypeptide is Copper-resistant cuproprotein CopI (Pseudomonas aeruginosa (strain ATCC 15692 / DSM 22644 / CIP 104116 / JCM 14847 / LMG 12228 / 1C / PRS 101 / PAO1)).